The following is a 616-amino-acid chain: Chaperone protein HscA (616 aa).

The protein belongs to the heat shock protein 70 family.

Chaperone involved in the maturation of iron-sulfur cluster-containing proteins. Has a low intrinsic ATPase activity which is markedly stimulated by HscB. Involved in the maturation of IscU. The chain is Chaperone protein HscA from Serratia proteamaculans (strain 568).